Consider the following 1118-residue polypeptide: Protein argonaute 1B (1118 aa).

Disordered regions lie at residues 1-175 (MALQ…SRTV) and 188-246 (APMV…RFPL). Positions 10–24 (PHHHQVPIMVKKKRT) are enriched in basic residues. Low complexity predominate over residues 25–35 (GSGSTGESSGE). Composition is skewed to gly residues over residues 54-92 (QHGGGRGWVPQHGGRGGGQYQGRGGHYQGRGGQGSHHPG), 100-110 (GRGGPGSHHPG), and 118-128 (GRGGSGSHHPG). 2 stretches are compositionally biased toward low complexity: residues 148–157 (RGGMPQPYYG) and 193–219 (PTPSGAGSSSQPAAEVSSGQVQQQFQQ). Positions 220 to 241 (LATRDQSSTSQAIQIAPPSSKS) are enriched in polar residues. In terms of domain architecture, PAZ spans 457-570 (PVIDFVAQLL…LPMEVCKIVE (114 aa)). Residues 746–1067 (LLIVILPDNN…AAFRARFYME (322 aa)) form the Piwi domain.

This sequence belongs to the argonaute family. Ago subfamily.

Probably involved in the RNA silencing pathway. May bind to short RNAs such as microRNAs (miRNAs) or short interfering RNAs (siRNAs), and represses the translation of mRNAs which are complementary to them. This chain is Protein argonaute 1B (AGO1B), found in Oryza sativa subsp. japonica (Rice).